A 709-amino-acid chain; its full sequence is Polyribonucleotide nucleotidyltransferase (709 aa).

Positions 485 and 491 each coordinate Mg(2+). Residues 552–611 (PRIYTMKIDPKKIKDVIGKGGATIRSLTEETGTSIDIDDDGTVKIAAVDSNAAKNVMGRI) form the KH domain. The S1 motif domain maps to 621-689 (GAIYKGKVTR…RQGRIRLTMK (69 aa)).

This sequence belongs to the polyribonucleotide nucleotidyltransferase family. Component of the RNA degradosome, which is a multiprotein complex involved in RNA processing and mRNA degradation. The cofactor is Mg(2+).

The protein resides in the cytoplasm. The catalysed reaction is RNA(n+1) + phosphate = RNA(n) + a ribonucleoside 5'-diphosphate. In terms of biological role, involved in mRNA degradation. Catalyzes the phosphorolysis of single-stranded polyribonucleotides processively in the 3'- to 5'-direction. The protein is Polyribonucleotide nucleotidyltransferase of Haemophilus influenzae (strain PittGG).